The primary structure comprises 794 residues: Protein sel-1 homolog 1 (794 aa).

Positions 1–21 (MQVHVGLTLLLCAVLLSSATA) are cleaved as a signal peptide. Positions 20-91 (TASSDDESNQ…EEEVSVGEEI (72 aa)) are disordered. An interaction with ERLEC1, OS9 and SYVN1 region spans residues 22–737 (SSDDESNQDE…DIFTQLDMDQ (716 aa)). Residues 22–738 (SSDDESNQDE…IFTQLDMDQL (717 aa)) lie on the Lumenal side of the membrane. 2 stretches are compositionally biased toward acidic residues: residues 23–32 (SDDESNQDES) and 62–77 (DSED…EEEE). Phosphoserine is present on Ser-63. The 49-residue stretch at 122-170 (AHGEPCHFPFLFLDKEYDECTSDGRQDGRLWCATTYDYKTDEKWGFCET) folds into the Fibronectin type-II domain. Cystine bridges form between Cys-127-Cys-153 and Cys-141-Cys-168. Sel1-like repeat units lie at residues 183 to 218 (AEMI…GMNH), 219 to 254 (TKAL…EEGS), 255 to 290 (PKGQ…LGGN), 291 to 326 (LIAH…NHVA), 373 to 409 (VQAQ…NAGN), 410 to 446 (SHAM…DMGN), 447 to 482 (PVGQ…EQGW), 483 to 518 (VDGQ…QGGH), and 519 to 554 (ILAF…ERGR). N-linked (GlcNAc...) asparagine glycans are attached at residues Asn-195 and Asn-217. Asn-272 carries an N-linked (GlcNAc...) asparagine glycan. Residues 352–537 (NSGMLEEDLI…MHASGTGVMR (186 aa)) are important for homodimerization and oligomerization. Asn-431 is a glycosylation site (N-linked (GlcNAc...) asparagine). Asn-608 carries N-linked (GlcNAc...) asparagine glycosylation. 2 Sel1-like repeats span residues 627–662 (TVAR…EQQH) and 664–699 (AQAM…EASP). Positions 643–723 (TDVDYETAFI…VVYFLQYIRE (81 aa)) are interaction with SYVN1. Positions 738–794 (LLGPEWDLYLMTIIALLLGTVIAYRQRQHQDVPVPRPPGPWPAPPQQEGPPEQQPPQ) are mediates retention in the endoplasmic reticulum. A helical transmembrane segment spans residues 739-759 (LGPEWDLYLMTIIALLLGTVI). The Cytoplasmic portion of the chain corresponds to 760–794 (AYRQRQHQDVPVPRPPGPWPAPPQQEGPPEQQPPQ). The segment at 768 to 794 (DVPVPRPPGPWPAPPQQEGPPEQQPPQ) is disordered. Residues 771 to 794 (VPRPPGPWPAPPQQEGPPEQQPPQ) are compositionally biased toward pro residues.

It belongs to the sel-1 family. As to quaternary structure, homodimer and homooligomer. May form a complex with ERLEC1, HSPA5, OS9, and SYVN1. Interacts with FOXRED2 and EDEM1. Interacts with LPL and LMF1; may stabilize the complex formed by LPL and LMF1 and thereby promote the export of LPL dimers. Component of the HRD1 complex, which comprises at least SYNV1/HRD1, DERL1/2, FAM8A1, HERPUD1/HERP, OS9, SEL1L and UBE2J1. SYNV1 assembles with SEL1L and FAM8A1 through its transmembrane domains, but interaction with its cytoplasmic domain is required to confer stability to FAM8A1 and enhance recruitment of HERPUD1. The interaction with SYNV1/HRD1 is direct. N-glycosylated.

The protein localises to the endoplasmic reticulum membrane. Functionally, plays a role in the endoplasmic reticulum quality control (ERQC) system also called ER-associated degradation (ERAD) involved in ubiquitin-dependent degradation of misfolded endoplasmic reticulum proteins. Enhances SYVN1 stability. Plays a role in LPL maturation and secretion. Required for normal differentiation of the pancreas epithelium, and for normal exocrine function and survival of pancreatic cells. May play a role in Notch signaling. The protein is Protein sel-1 homolog 1 (Sel1l) of Mesocricetus auratus (Golden hamster).